Here is a 248-residue protein sequence, read N- to C-terminus: 3-deoxy-manno-octulosonate cytidylyltransferase (248 aa).

It belongs to the KdsB family. Mg(2+) serves as cofactor.

Its subcellular location is the cytoplasm. It catalyses the reaction 3-deoxy-alpha-D-manno-oct-2-ulosonate + CTP = CMP-3-deoxy-beta-D-manno-octulosonate + diphosphate. Its pathway is nucleotide-sugar biosynthesis; CMP-3-deoxy-D-manno-octulosonate biosynthesis; CMP-3-deoxy-D-manno-octulosonate from 3-deoxy-D-manno-octulosonate and CTP: step 1/1. It functions in the pathway bacterial outer membrane biogenesis; lipopolysaccharide biosynthesis. Activates KDO (a required 8-carbon sugar) for incorporation into bacterial lipopolysaccharide in Gram-negative bacteria. The chain is 3-deoxy-manno-octulosonate cytidylyltransferase from Escherichia coli O157:H7.